We begin with the raw amino-acid sequence, 1098 residues long: NACHT, LRR and PYD domains-containing protein 5 (1098 aa).

Residues 1–97 form the Pyrin domain; sequence MREAKIAPLS…SEMARDEMKK (97 aa). Residues 104 to 131 are disordered; sequence SEDSAPTKTDQGPSMKEVPGPREDPQDS. Residues 122–131 are compositionally biased toward basic and acidic residues; sequence PGPREDPQDS. The region spanning 180 to 503 is the NACHT domain; sequence LTVVLHGPPG…ALFYVLRGVE (324 aa). 186–193 serves as a coordination point for ATP; it reads GPPGVGKS. LRR repeat units follow at residues 851 to 871, 880 to 900, 908 to 928, 937 to 958, 965 to 985, 993 to 1013, and 1021 to 1041; these read GLTH…SLLC, GLQK…GFLA, HLTH…NLLC, PLRD…SLSN, RLRS…AALC, TLTR…KALS, and HLAS…TTLC.

It belongs to the NLRP family. In terms of assembly, component of the subcortical maternal complex (SCMC), at least composed of NLRP5, KHDC3, OOEP, and TLE6. Within the complex, interacts with OOEP, KHDC3 and TLE6. The SCMC may facilitate translocation of its components between the nuclear and cytoplasmic compartments. As part of the SCMC interacts with the SCMC-associated protein ZBED3. As part of the SCMC interacts with the SCMC-associated protein CFL1/Cofilin-1. Interacts with PRKCE. Interacts with TUBB3 at cytoskeleton microtubules. Phosphorylated by PRKCE. Oocyte-specific.

It is found in the cytoplasm. It localises to the cytoplasmic vesicle. Its subcellular location is the secretory vesicle. The protein localises to the cortical granule. The protein resides in the mitochondrion. It is found in the nucleus. It localises to the nucleolus. Its subcellular location is the golgi apparatus. Component of the subcortical maternal complex (SCMC), a multiprotein complex that plays a key role in early embryonic development. The SCMC complex is a structural constituent of cytoplasmic lattices, which consist in fibrous structures found in the cytoplasm of oocytes and preimplantation embryos. They are required to store maternal proteins critical for embryonic development, such as proteins that control epigenetic reprogramming of the preimplantation embryo, and prevent their degradation or activation. Required for the localization of cortical granules to the cortex of oocytes, via association with the cortical actin scaffold. Required for cortical actin clearance prior to oocyte exocytosis and prevention of polyspermy. Involved in regulating post-fertilization Ca(2+) release and endoplasmic reticulum storage (ER) storage via regulation of cellular localization. May be involved in the localization of mitochondria to the cytoplasm and perinuclear region in oocytes and early stage embryos, independent of its role in CPL formation. This chain is NACHT, LRR and PYD domains-containing protein 5 (NLRP5), found in Bos taurus (Bovine).